A 162-amino-acid chain; its full sequence is MVSLEEIPLIAIVRIRGRVNVKPEIRRTLEMLHLNRKFWATLVPLTDSYKGMIHRVKDYSTYGEIDGPTLLALLRERGELKMGGSLSDEWLSSNTDFSSIEELAEALLSKRVYLHKLGWIKPYFRLHPPKGGFKRPTKRAWNDGGELGYRGKEINTLIRRMI.

It belongs to the universal ribosomal protein uL30 family. Part of the 50S ribosomal subunit.

In Korarchaeum cryptofilum (strain OPF8), this protein is Large ribosomal subunit protein uL30.